A 736-amino-acid polypeptide reads, in one-letter code: Nucleoporin nup60 (736 aa).

A disordered region spans residues 1–46 (MSSGPIRTLHKGKAARNRTPYDRIAASKDGNHSNGPQTPSKSIFQR). The segment covering 19–31 (TPYDRIAASKDGN) has biased composition (basic and acidic residues). A compositionally biased stretch (polar residues) spans 32–43 (HSNGPQTPSKSI). 4 positions are modified to phosphoserine: serine 157, serine 159, serine 161, and serine 162. Disordered regions lie at residues 178–210 (RAAA…NSAK), 295–321 (DTSF…KTPS), 338–519 (TPSI…PNET), 565–614 (AVTD…RSLF), and 647–701 (EQAE…FPKF). 2 stretches are compositionally biased toward polar residues: residues 196 to 210 (RTSS…NSAK) and 295 to 314 (DTSF…TTAN). The span at 375–397 (QIRPSSEKSEPEKKEPSAFETLE) shows a compositional bias: basic and acidic residues. The segment covering 456–473 (SATTDKPSPPVSSIFSFN) has biased composition (polar residues). Low complexity-rich tracts occupy residues 474–505 (APSA…TSFS) and 573–587 (EVSS…TMIS). Residues 588–597 (QPNTGFSFGS) are compositionally biased toward polar residues. Positions 664 to 692 (EVEKPSAEGTNEHKQDATMTLEKTDKQGS) are enriched in basic and acidic residues.

As to quaternary structure, component of the nuclear pore complex (NPC). NPC constitutes the exclusive means of nucleocytoplasmic transport. NPCs allow the passive diffusion of ions and small molecules and the active, nuclear transport receptor-mediated bidirectional transport of macromolecules such as proteins, RNAs, ribonucleoparticles (RNPs), and ribosomal subunits across the nuclear envelope.

Its subcellular location is the nucleus. It is found in the nuclear pore complex. The protein resides in the nucleus membrane. Functions as a component of the nuclear pore complex (NPC). NPC components, collectively referred to as nucleoporins (NUPs), can play the role of both NPC structural components and of docking or interaction partners for transiently associated nuclear transport factors. Active directional transport is assured by both, a Phe-Gly (FG) repeat affinity gradient for these transport factors across the NPC and a transport cofactor concentration gradient across the nuclear envelope. This chain is Nucleoporin nup60 (nup60), found in Schizosaccharomyces pombe (strain 972 / ATCC 24843) (Fission yeast).